The following is a 237-amino-acid chain: MLSIIRRKTRIVDITKQGNGNVPPACHLCSRRLTKEWSFGEGTICSFHRIRCRVQCGRSFWHQPETPIDGLSWDSTTWELTRISSSKDPDISGQKDKRYGRRKEKNPKTDPPALDSRVREHEPIHEHEPIPGRVGPADTKQRCKANLRGDSGFVSIGRSNHPKLSREDCHNTRVPPGTQGVRGGNVQLDKPRERPVSYQHGSKKRSEHRNPVSRSHRRKKAKTRTKTSKLGKSRDIC.

The Cytoplasmic segment spans residues 1–148; that stretch reads MLSIIRRKTR…TKQRCKANLR (148 aa). The segment at 84 to 237 is disordered; the sequence is SSSKDPDISG…SKLGKSRDIC (154 aa). Composition is skewed to basic and acidic residues over residues 85 to 97 and 116 to 130; these read SSKDPDISGQKDK and SRVREHEPIHEHEPI. Residues 149–165 form a helical membrane-spanning segment; it reads GDSGFVSIGRSNHPKLS. At 166–237 the chain is on the extracellular side; it reads REDCHNTRVP…SKLGKSRDIC (72 aa). Basic residues predominate over residues 214 to 231; it reads RSHRRKKAKTRTKTSKLG.

It is found in the host membrane. The polypeptide is Protein VP5 (VP5) (Drosophila x virus (isolate Chung/1996) (DXV)).